We begin with the raw amino-acid sequence, 34 residues long: Trypsin inhibitor (34 aa).

2 cysteine pairs are disulfide-bonded: Cys-7–Cys-29 and Cys-11–Cys-25.

The protein resides in the secreted. Its function is as follows. Inhibits trypsin. The sequence is that of Trypsin inhibitor from Veronica hederifolia (Ivy-leaved speedwell).